The following is a 620-amino-acid chain: UPF0313 protein BT_0254 (620 aa).

Residues 311 to 591 enclose the Radical SAM core domain; the sequence is AYDMIKFSVN…AQRQFFFWYK (281 aa). Positions 325, 329, and 332 each coordinate [4Fe-4S] cluster.

The protein belongs to the UPF0313 family. Requires [4Fe-4S] cluster as cofactor.

This chain is UPF0313 protein BT_0254, found in Bacteroides thetaiotaomicron (strain ATCC 29148 / DSM 2079 / JCM 5827 / CCUG 10774 / NCTC 10582 / VPI-5482 / E50).